Here is a 268-residue protein sequence, read N- to C-terminus: Undecaprenyl-diphosphatase (268 aa).

The next 7 helical transmembrane spans lie at 43 to 63, 85 to 105, 108 to 128, 141 to 161, 184 to 204, 217 to 237, and 246 to 266; these read FWKT…LAIY, IGVL…GTFI, VLFN…VLLW, AMAF…AAMV, AAEF…VYDV, FIII…VKTF, and FTFF…ALAL.

The protein belongs to the UppP family.

It localises to the cell inner membrane. The enzyme catalyses di-trans,octa-cis-undecaprenyl diphosphate + H2O = di-trans,octa-cis-undecaprenyl phosphate + phosphate + H(+). Its function is as follows. Catalyzes the dephosphorylation of undecaprenyl diphosphate (UPP). Confers resistance to bacitracin. The sequence is that of Undecaprenyl-diphosphatase from Afipia carboxidovorans (strain ATCC 49405 / DSM 1227 / KCTC 32145 / OM5) (Oligotropha carboxidovorans).